A 156-amino-acid polypeptide reads, in one-letter code: Arginine repressor (156 aa).

Belongs to the ArgR family.

The protein resides in the cytoplasm. It participates in amino-acid biosynthesis; L-arginine biosynthesis [regulation]. Its function is as follows. Regulates arginine biosynthesis genes. This is Arginine repressor from Proteus mirabilis (strain HI4320).